A 91-amino-acid polypeptide reads, in one-letter code: Small ribosomal subunit protein bS18 (91 aa).

The interval 1 to 21 (MSDERTPQRSSGPRKKRPFQR) is disordered. The span at 12–21 (GPRKKRPFQR) shows a compositional bias: basic residues.

The protein belongs to the bacterial ribosomal protein bS18 family. Part of the 30S ribosomal subunit. Forms a tight heterodimer with protein bS6.

Functionally, binds as a heterodimer with protein bS6 to the central domain of the 16S rRNA, where it helps stabilize the platform of the 30S subunit. This chain is Small ribosomal subunit protein bS18, found in Geotalea uraniireducens (strain Rf4) (Geobacter uraniireducens).